A 119-amino-acid polypeptide reads, in one-letter code: Inner membrane protein YijD (119 aa).

The Cytoplasmic portion of the chain corresponds to 1–8 (MKQANQDR). A helical membrane pass occupies residues 9–28 (GTLLLALVAGLSINGTFAAL). At 29–31 (FSS) the chain is on the periplasmic side. The helical transmembrane segment at 32–50 (IVPFSVFPIISLVLTVYCL) threads the bilayer. The Cytoplasmic segment spans residues 51-61 (HQRYLNRTMPV). Residues 62-84 (GLPGLAAACFILGVLLYSTVVRA) traverse the membrane as a helical segment. At 85 to 88 (EYPD) the chain is on the periplasmic side. Residues 89 to 108 (IGSNFFPAVLSVIMVFWIGA) traverse the membrane as a helical segment. The Cytoplasmic segment spans residues 109–119 (KMRNRKQEVAE).

The protein localises to the cell inner membrane. This chain is Inner membrane protein YijD (yijD), found in Escherichia coli O6:H1 (strain CFT073 / ATCC 700928 / UPEC).